The chain runs to 188 residues: dCTP deaminase (188 aa).

Residues 111 to 116 (KSTYAR), 135 to 137 (TLE), Gln-156, Tyr-170, and Gln-180 contribute to the dCTP site. Glu-137 functions as the Proton donor/acceptor in the catalytic mechanism.

The protein belongs to the dCTP deaminase family. Homotrimer.

The catalysed reaction is dCTP + H2O + H(+) = dUTP + NH4(+). It participates in pyrimidine metabolism; dUMP biosynthesis; dUMP from dCTP (dUTP route): step 1/2. Its function is as follows. Catalyzes the deamination of dCTP to dUTP. This is dCTP deaminase from Nitrosomonas eutropha (strain DSM 101675 / C91 / Nm57).